Consider the following 137-residue polypeptide: MGAFPSPPPWGWSTGFITTPLTTGRLPSQHLDPALPKLFWFTPTLPTCPTVAKQFWDTKRTSPDGNLKVADLPSFAISFATAPAALANCPPLPRVISMLCMAVPKGISVEVDSSFLSKNPFPNCTSFFQSIRLSRCI.

This sequence belongs to the ycf72 family.

The protein localises to the plastid. It is found in the chloroplast. This is an uncharacterized protein from Oryza nivara (Indian wild rice).